Reading from the N-terminus, the 102-residue chain is Small ribosomal subunit protein uS10 (102 aa).

The protein belongs to the universal ribosomal protein uS10 family. Part of the 30S ribosomal subunit.

In terms of biological role, involved in the binding of tRNA to the ribosomes. The sequence is that of Small ribosomal subunit protein uS10 from Moorella thermoacetica (strain ATCC 39073 / JCM 9320).